Here is a 203-residue protein sequence, read N- to C-terminus: Holliday junction branch migration complex subunit RuvA (203 aa).

A domain I region spans residues 1-64 (MIGRLNGILV…EDAQLLYGFI (64 aa)). Positions 65 to 143 (TKQERALFRL…SLLEASVGNE (79 aa)) are domain II. Positions 144-154 (REFMLQTNYTA) are flexible linker. Residues 155-203 (PAANAEEDAISALVSLGYKPPQASRAVSKAYKEGMDTETLIKLALKSML) are domain III.

Belongs to the RuvA family. In terms of assembly, homotetramer. Forms an RuvA(8)-RuvB(12)-Holliday junction (HJ) complex. HJ DNA is sandwiched between 2 RuvA tetramers; dsDNA enters through RuvA and exits via RuvB. An RuvB hexamer assembles on each DNA strand where it exits the tetramer. Each RuvB hexamer is contacted by two RuvA subunits (via domain III) on 2 adjacent RuvB subunits; this complex drives branch migration. In the full resolvosome a probable DNA-RuvA(4)-RuvB(12)-RuvC(2) complex forms which resolves the HJ.

It localises to the cytoplasm. Functionally, the RuvA-RuvB-RuvC complex processes Holliday junction (HJ) DNA during genetic recombination and DNA repair, while the RuvA-RuvB complex plays an important role in the rescue of blocked DNA replication forks via replication fork reversal (RFR). RuvA specifically binds to HJ cruciform DNA, conferring on it an open structure. The RuvB hexamer acts as an ATP-dependent pump, pulling dsDNA into and through the RuvAB complex. HJ branch migration allows RuvC to scan DNA until it finds its consensus sequence, where it cleaves and resolves the cruciform DNA. The protein is Holliday junction branch migration complex subunit RuvA of Shewanella denitrificans (strain OS217 / ATCC BAA-1090 / DSM 15013).